The primary structure comprises 518 residues: MSRFQSLLSFVLVSLAAVANAAIGPVADLTLTNAAVSPDGFSREAVVVNGITPAPLIAGQKGDRFQLNVIDNLTNHTMLKTTSIHWHGFFQHGTNWADGVSFVNQCPIASGHSFLYDFQVPDQAGTFWYHSHLSTQYCDGLRGPFVVYDPNDPQASLYDIDNDDTVITLADWYHVAAKLGPRFPLGADATLINGLGRSPGTTTADLAVIKVTQGKRYRFRLVSLSCDPNHTFSIDGHTMTVIEADSVNTQPLEVDSIQIFAAQRYSFVLDASQPVDNYWIRANPAFGNVGFAGGINSAILRYDGAPEVEPTTTQTTSTKPLNEADLHPLTPMPVPGRPEAGGVDKPLNMVFNFNGTNFFINNHSFVPPSVPVLLQILSGAQAAQDLVPDGSVYVLPSNSSIEISFPATANAPGTPHPFHLHGHTFAVVRSAGSSEYNYDNPIFRDVVSTGQPGDNVTIRFQTNNPGPWFLHCHIDFHLEAGFAVVLAEDTPDTAAVNPVPQSWSDLCPIYDALDPSDL.

Positions 1-21 (MSRFQSLLSFVLVSLAAVANA) are cleaved as a signal peptide. Plastocyanin-like domains lie at 23 to 148 (IGPV…FVVY) and 160 to 302 (IDND…ILRY). Residues Asn-72 and Asn-75 are each glycosylated (N-linked (GlcNAc...) asparagine). Cu cation contacts are provided by His-85, His-87, His-130, and His-132. 2 disulfide bridges follow: Cys-106/Cys-507 and Cys-138/Cys-226. N-linked (GlcNAc...) asparagine glycosylation occurs at Asn-229. Positions 308–330 (VEPTTTQTTSTKPLNEADLHPLT) are disordered. 3 N-linked (GlcNAc...) asparagine glycosylation sites follow: Asn-354, Asn-362, and Asn-398. The Plastocyanin-like 3 domain maps to 369 to 489 (SVPVLLQILS…AGFAVVLAED (121 aa)). Cu cation contacts are provided by His-416, His-419, His-421, His-471, Cys-472, His-473, and His-477.

This sequence belongs to the multicopper oxidase family. The cofactor is Cu cation.

The protein localises to the secreted. It catalyses the reaction 4 hydroquinone + O2 = 4 benzosemiquinone + 2 H2O. Its function is as follows. Lignin degradation and detoxification of lignin-derived products. Cleaves the C-C and C-O bonds of some phenolic lignin model compounds (such as O- and P-quinols, aminophenols and phenylenediamine). May also be involved in synthesis of phenoxazinone pigments. This is Laccase (LCC3-1) from Pycnoporus cinnabarinus (Cinnabar-red polypore).